Reading from the N-terminus, the 474-residue chain is tRNA modification GTPase MnmE (474 aa).

(6S)-5-formyl-5,6,7,8-tetrahydrofolate-binding residues include R35, E92, and K135. Positions G231–G396 constitute a TrmE-type G domain. K(+) is bound at residue N241. Residues N241–S246, T260–T266, D285–G288, and S377–R379 contribute to the GTP site. Residue S245 participates in Mg(2+) binding. T260, I262, and T265 together coordinate K(+). T266 provides a ligand contact to Mg(2+). K474 serves as a coordination point for (6S)-5-formyl-5,6,7,8-tetrahydrofolate.

The protein belongs to the TRAFAC class TrmE-Era-EngA-EngB-Septin-like GTPase superfamily. TrmE GTPase family. In terms of assembly, homodimer. Heterotetramer of two MnmE and two MnmG subunits. K(+) serves as cofactor.

It localises to the cytoplasm. Functionally, exhibits a very high intrinsic GTPase hydrolysis rate. Involved in the addition of a carboxymethylaminomethyl (cmnm) group at the wobble position (U34) of certain tRNAs, forming tRNA-cmnm(5)s(2)U34. The protein is tRNA modification GTPase MnmE of Ralstonia nicotianae (strain ATCC BAA-1114 / GMI1000) (Ralstonia solanacearum).